Here is a 450-residue protein sequence, read N- to C-terminus: 3-phosphoshikimate 1-carboxyvinyltransferase (450 aa).

Positions 1-23 (MSSHGAPIPMTSSACGPLTGEAR) are disordered. 3-phosphoshikimate is bound by residues Lys28, Ser29, and Arg33. Position 28 (Lys28) interacts with phosphoenolpyruvate. 2 residues coordinate phosphoenolpyruvate: Gly101 and Arg129. 3-phosphoshikimate-binding residues include Ser174, Gln176, Asp327, and Lys354. Residue Gln176 participates in phosphoenolpyruvate binding. Asp327 functions as the Proton acceptor in the catalytic mechanism. Phosphoenolpyruvate-binding residues include Arg358 and Arg403.

It belongs to the EPSP synthase family. Monomer.

The protein localises to the cytoplasm. It carries out the reaction 3-phosphoshikimate + phosphoenolpyruvate = 5-O-(1-carboxyvinyl)-3-phosphoshikimate + phosphate. The protein operates within metabolic intermediate biosynthesis; chorismate biosynthesis; chorismate from D-erythrose 4-phosphate and phosphoenolpyruvate: step 6/7. Functionally, catalyzes the transfer of the enolpyruvyl moiety of phosphoenolpyruvate (PEP) to the 5-hydroxyl of shikimate-3-phosphate (S3P) to produce enolpyruvyl shikimate-3-phosphate and inorganic phosphate. In Roseobacter denitrificans (strain ATCC 33942 / OCh 114) (Erythrobacter sp. (strain OCh 114)), this protein is 3-phosphoshikimate 1-carboxyvinyltransferase.